The chain runs to 309 residues: GATA transcription factor 25 (309 aa).

The tract at residues 1 to 35 (MFGRHSIIPNNQIGTASASAGEDHVSASATSGHIP) is disordered. The segment covering 8–18 (IPNNQIGTASA) has biased composition (polar residues). The 36-residue stretch at 77-112 (PPEGANQLTISFRGQVYVFDAVGADKVDAVLSLLGG) folds into the Tify domain. In terms of domain architecture, CCT spans 146–188 (RAQSLDRFRKKRNARCFEKKVRYGVRQEVALRMARNKGQFTSS). Residues 187–202 (SSKMTDGAYNSGTDQD) are compositionally biased toward polar residues. The disordered stretch occupies residues 187–207 (SSKMTDGAYNSGTDQDSAQDD). A GATA-type zinc finger spans residues 208–267 (AHPEISCTHCGISSKCTPMMRRGPSGPRTLCNACGLFWANRGTLRDLSKKTEENQLALMK). Residues 290-309 (EHTSMVSLANGDNSNLLGDH) form a disordered region. Residues 293–309 (SMVSLANGDNSNLLGDH) are compositionally biased toward polar residues.

Belongs to the type IV zinc-finger family. Class C subfamily. Predominantly expressed in shoot apices, inflorescences and roots.

It localises to the nucleus. Transcriptional activator that specifically binds 5'-GATA-3' or 5'-GAT-3' motifs within gene promoters. In Arabidopsis thaliana (Mouse-ear cress), this protein is GATA transcription factor 25 (GATA25).